Here is a 553-residue protein sequence, read N- to C-terminus: Dihydroxy-acid dehydratase (553 aa).

Aspartate 78 contributes to the Mg(2+) binding site. Cysteine 119 is a [2Fe-2S] cluster binding site. 2 residues coordinate Mg(2+): aspartate 120 and lysine 121. Lysine 121 bears the N6-carboxylysine mark. [2Fe-2S] cluster is bound at residue cysteine 192. Residue glutamate 442 coordinates Mg(2+). The Proton acceptor role is filled by serine 468.

This sequence belongs to the IlvD/Edd family. In terms of assembly, homodimer. The cofactor is [2Fe-2S] cluster. It depends on Mg(2+) as a cofactor.

The enzyme catalyses (2R)-2,3-dihydroxy-3-methylbutanoate = 3-methyl-2-oxobutanoate + H2O. It carries out the reaction (2R,3R)-2,3-dihydroxy-3-methylpentanoate = (S)-3-methyl-2-oxopentanoate + H2O. It functions in the pathway amino-acid biosynthesis; L-isoleucine biosynthesis; L-isoleucine from 2-oxobutanoate: step 3/4. It participates in amino-acid biosynthesis; L-valine biosynthesis; L-valine from pyruvate: step 3/4. Its function is as follows. Functions in the biosynthesis of branched-chain amino acids. Catalyzes the dehydration of (2R,3R)-2,3-dihydroxy-3-methylpentanoate (2,3-dihydroxy-3-methylvalerate) into 2-oxo-3-methylpentanoate (2-oxo-3-methylvalerate) and of (2R)-2,3-dihydroxy-3-methylbutanoate (2,3-dihydroxyisovalerate) into 2-oxo-3-methylbutanoate (2-oxoisovalerate), the penultimate precursor to L-isoleucine and L-valine, respectively. This chain is Dihydroxy-acid dehydratase, found in Campylobacter hominis (strain ATCC BAA-381 / DSM 21671 / CCUG 45161 / LMG 19568 / NCTC 13146 / CH001A).